Consider the following 82-residue polypeptide: Endocuticle structural glycoprotein SgAbd-5 (82 aa).

At glutamine 1 the chain carries Pyrrolidone carboxylic acid. Residues 18 to 82 enclose the Chitin-binding type R&amp;R domain; it reads LGQYNFAYRT…ENGYQPRVQS (65 aa).

Its function is as follows. Component of the soft endocuticle of desert locust. The chain is Endocuticle structural glycoprotein SgAbd-5 from Schistocerca gregaria (Desert locust).